Reading from the N-terminus, the 508-residue chain is Phenylalanine--tRNA ligase alpha subunit (508 aa).

Alanine 2 carries the post-translational modification N-acetylalanine. Phosphoserine is present on residues serine 193 and serine 301. Residue lysine 311 is modified to N6-acetyllysine. L-phenylalanine-binding positions include threonine 329, 372-374, and tyrosine 412; that span reads QIE. Position 414 (glutamate 414) interacts with Mg(2+). An L-phenylalanine-binding site is contributed by phenylalanine 438.

This sequence belongs to the class-II aminoacyl-tRNA synthetase family. Phe-tRNA synthetase alpha subunit type 2 subfamily. In terms of assembly, heterotetramer; dimer of two heterodimers formed by FARSA and FARSB. Mg(2+) serves as cofactor.

The protein localises to the cytoplasm. The enzyme catalyses tRNA(Phe) + L-phenylalanine + ATP = L-phenylalanyl-tRNA(Phe) + AMP + diphosphate + H(+). The protein is Phenylalanine--tRNA ligase alpha subunit (Farsa) of Rattus norvegicus (Rat).